The following is a 104-amino-acid chain: Pyrimidine/purine nucleoside phosphorylase (104 aa).

This sequence belongs to the nucleoside phosphorylase PpnP family.

It catalyses the reaction a purine D-ribonucleoside + phosphate = a purine nucleobase + alpha-D-ribose 1-phosphate. The catalysed reaction is adenosine + phosphate = alpha-D-ribose 1-phosphate + adenine. It carries out the reaction cytidine + phosphate = cytosine + alpha-D-ribose 1-phosphate. The enzyme catalyses guanosine + phosphate = alpha-D-ribose 1-phosphate + guanine. It catalyses the reaction inosine + phosphate = alpha-D-ribose 1-phosphate + hypoxanthine. The catalysed reaction is thymidine + phosphate = 2-deoxy-alpha-D-ribose 1-phosphate + thymine. It carries out the reaction uridine + phosphate = alpha-D-ribose 1-phosphate + uracil. The enzyme catalyses xanthosine + phosphate = alpha-D-ribose 1-phosphate + xanthine. Functionally, catalyzes the phosphorolysis of diverse nucleosides, yielding D-ribose 1-phosphate and the respective free bases. Can use uridine, adenosine, guanosine, cytidine, thymidine, inosine and xanthosine as substrates. Also catalyzes the reverse reactions. In Syntrophotalea carbinolica (strain DSM 2380 / NBRC 103641 / GraBd1) (Pelobacter carbinolicus), this protein is Pyrimidine/purine nucleoside phosphorylase.